The chain runs to 398 residues: MKLKFYKLPLITTAFSFVFLTACSTPQSSFFLPAQTTISTLKINGMENKTGYFLETQRSRGSYNPTASLTMIKLGDEKEFKNVDTTKQDEVLFANIYGGISSLLNFRIIQPMLTYWNLVNNSLSQIGSTNDLITFKDSGYKDQLAKALANNLIVADEGNNNFWFGLKALKFDTVKLQANNTATSSTRASTTQNTNNKIDAREKITINGNGGTNNDQNATVQKLIGIENIEVEFSFVKTGFNGNEIKFEDYVTDSSPTTSLLKQVWKSKWNTELTHTSFKFKLNSFNVLLTYQLEANQKSQYLPNGFSFLFPSNLEGKIDSSKSYWNNLVDFSKRTTNEENTMLLTDLQKKQDQVNRFVGFIGQNHFTLSANSINEKQFNDASTADFFKAIFQKVSINE.

The signal sequence occupies residues 1-22 (MKLKFYKLPLITTAFSFVFLTA). C23 is lipidated: N-palmitoyl cysteine. C23 carries the S-diacylglycerol cysteine lipid modification.

It is found in the cell membrane. This is an uncharacterized protein from Mycoplasma genitalium (strain ATCC 33530 / DSM 19775 / NCTC 10195 / G37) (Mycoplasmoides genitalium).